We begin with the raw amino-acid sequence, 309 residues long: tRNA dimethylallyltransferase (309 aa).

10–17 (GPTAVGKT) is a binding site for ATP. 12 to 17 (TAVGKT) provides a ligand contact to substrate. Residues 35 to 38 (DSMQ) form an interaction with substrate tRNA region.

This sequence belongs to the IPP transferase family. In terms of assembly, monomer. It depends on Mg(2+) as a cofactor.

The catalysed reaction is adenosine(37) in tRNA + dimethylallyl diphosphate = N(6)-dimethylallyladenosine(37) in tRNA + diphosphate. Catalyzes the transfer of a dimethylallyl group onto the adenine at position 37 in tRNAs that read codons beginning with uridine, leading to the formation of N6-(dimethylallyl)adenosine (i(6)A). The sequence is that of tRNA dimethylallyltransferase from Clostridium botulinum (strain Alaska E43 / Type E3).